The sequence spans 75 residues: Probable protein BRICK1-A (75 aa).

Residues 41 to 72 adopt a coiled-coil conformation; that stretch reads MSCRSRLATLNEKLTALERRIEYIEARVTKGE.

This sequence belongs to the BRK1 family.

It is found in the cytoplasm. Its subcellular location is the cytoskeleton. Its function is as follows. Involved in regulation of actin and microtubule organization. Part of a WAVE complex that activates the Arp2/3 complex. The polypeptide is Probable protein BRICK1-A (brk1-a) (Xenopus laevis (African clawed frog)).